The sequence spans 147 residues: uncharacterized protein (147 aa).

The 141-residue stretch at 7–147 (LEINYKTDEL…GHDVLVWAPK (141 aa)) folds into the N-acetyltransferase domain.

This is an uncharacterized protein from Staphylococcus haemolyticus (strain JCSC1435).